Reading from the N-terminus, the 197-residue chain is MQVLRNSGSWLLRSWAWPPTTRVVAGVPAPTIHMSAQQMQDAAAKEEVEKAETPAPAPSRSSFSIYPPIPGQESSLRWAGKKFEEIPIAHIKASYNNTQIHVVSAAHQPLARASCGTEGFRNAKKGTGIAAQTAGIAAAAKATGKGVTHVRVVVKGLGPGRLSAIKGLTMGGLEVISITDNTPIPHNGCRPRKARRL.

The segment covering alanine 43 to glutamate 52 has biased composition (basic and acidic residues). Residues alanine 43–tyrosine 66 form a disordered region.

It belongs to the universal ribosomal protein uS11 family. As to quaternary structure, component of the mitochondrial ribosome small subunit (28S) which comprises a 12S rRNA and about 30 distinct proteins.

The protein resides in the mitochondrion. The chain is Small ribosomal subunit protein uS11m (MRPS11) from Bos taurus (Bovine).